A 223-amino-acid chain; its full sequence is Translation initiation factor 6 (223 aa).

This sequence belongs to the eIF-6 family.

Its function is as follows. Binds to the 50S ribosomal subunit and prevents its association with the 30S ribosomal subunit to form the 70S initiation complex. This is Translation initiation factor 6 from Methanobrevibacter smithii (strain ATCC 35061 / DSM 861 / OCM 144 / PS).